The sequence spans 426 residues: Enolase (426 aa).

Residue glutamine 163 participates in (2R)-2-phosphoglycerate binding. Glutamate 205 serves as the catalytic Proton donor. The Mg(2+) site is built by aspartate 242, glutamate 286, and aspartate 313. (2R)-2-phosphoglycerate contacts are provided by lysine 338, arginine 367, serine 368, and lysine 389. Catalysis depends on lysine 338, which acts as the Proton acceptor.

This sequence belongs to the enolase family. Mg(2+) serves as cofactor.

It is found in the cytoplasm. The protein resides in the secreted. Its subcellular location is the cell surface. It carries out the reaction (2R)-2-phosphoglycerate = phosphoenolpyruvate + H2O. It functions in the pathway carbohydrate degradation; glycolysis; pyruvate from D-glyceraldehyde 3-phosphate: step 4/5. Catalyzes the reversible conversion of 2-phosphoglycerate (2-PG) into phosphoenolpyruvate (PEP). It is essential for the degradation of carbohydrates via glycolysis. The protein is Enolase of Helicobacter pylori (strain Shi470).